Here is a 100-residue protein sequence, read N- to C-terminus: Urease subunit gamma (100 aa).

Belongs to the urease gamma subunit family. In terms of assembly, heterotrimer of UreA (gamma), UreB (beta) and UreC (alpha) subunits. Three heterotrimers associate to form the active enzyme.

The protein localises to the cytoplasm. The enzyme catalyses urea + 2 H2O + H(+) = hydrogencarbonate + 2 NH4(+). The protein operates within nitrogen metabolism; urea degradation; CO(2) and NH(3) from urea (urease route): step 1/1. In Bordetella bronchiseptica (strain ATCC BAA-588 / NCTC 13252 / RB50) (Alcaligenes bronchisepticus), this protein is Urease subunit gamma.